Here is an 89-residue protein sequence, read N- to C-terminus: Small ribosomal subunit protein uS15 (89 aa).

It belongs to the universal ribosomal protein uS15 family. Part of the 30S ribosomal subunit. Forms a bridge to the 50S subunit in the 70S ribosome, contacting the 23S rRNA.

One of the primary rRNA binding proteins, it binds directly to 16S rRNA where it helps nucleate assembly of the platform of the 30S subunit by binding and bridging several RNA helices of the 16S rRNA. In terms of biological role, forms an intersubunit bridge (bridge B4) with the 23S rRNA of the 50S subunit in the ribosome. The sequence is that of Small ribosomal subunit protein uS15 from Nitratidesulfovibrio vulgaris (strain DP4) (Desulfovibrio vulgaris).